The sequence spans 158 residues: Cystin-1 (158 aa).

Residues 1–146 (MGSGSSRSSR…AAISYDHSEE (146 aa)) form a disordered region. The N-myristoyl glycine moiety is linked to residue Gly2. Low complexity-rich tracts occupy residues 19-32 (ESLPAGPGAAALEG) and 39-52 (PVAAAEVPGAAAEE). Residues 29 to 33 (ALEGG) carry the Ciliary targeting motif motif. Positions 65–75 (DGRDETLRLLD) are enriched in basic and acidic residues.

As to quaternary structure, interacts (when myristoylated) with UNC119 and UNC119B; interaction is required for localization to cilium. As to expression, expressed at high levels in the kidney and pancreas. Moderate expression seen in the skeletal muscle, liver and heart. A weak expression seen in the brain, lung, uterus, prostate, testis, small intestine and colon.

Its subcellular location is the cell projection. It is found in the cilium membrane. The protein localises to the cytoplasm. It localises to the cytoskeleton. The protein resides in the cilium axoneme. The polypeptide is Cystin-1 (CYS1) (Homo sapiens (Human)).